Consider the following 169-residue polypeptide: Allophycocyanin subunit beta-18 (169 aa).

Residue N72 is modified to N4-methylasparagine. (2R,3E)-phycocyanobilin is bound at residue C82.

This sequence belongs to the phycobiliprotein family. Heterodimer of ApcE and this beta chain. Post-translationally, contains one covalently linked bilin chromophore. The chromophore is added by phycocyanobilin lyase CpcUS.

The protein resides in the cellular thylakoid membrane. Its function is as follows. A variant beta-allophycocyanin (AP) which forms a complex with ApcE, a phycobilisome terminal emitter that influences energy transfer to photosystem II. The polypeptide is Allophycocyanin subunit beta-18 (apcF) (Picosynechococcus sp. (strain ATCC 27264 / PCC 7002 / PR-6) (Agmenellum quadruplicatum)).